The chain runs to 677 residues: UvrABC system protein B (677 aa).

Residues Asp31–Arg417 form the Helicase ATP-binding domain. Gly44 to Ser51 is a binding site for ATP. The Beta-hairpin signature appears at Tyr97–Val120. The Helicase C-terminal domain occupies Gln434–Val596. The UVR domain occupies Lys629–Lys664.

This sequence belongs to the UvrB family. As to quaternary structure, forms a heterotetramer with UvrA during the search for lesions. Interacts with UvrC in an incision complex.

The protein localises to the cytoplasm. Functionally, the UvrABC repair system catalyzes the recognition and processing of DNA lesions. A damage recognition complex composed of 2 UvrA and 2 UvrB subunits scans DNA for abnormalities. Upon binding of the UvrA(2)B(2) complex to a putative damaged site, the DNA wraps around one UvrB monomer. DNA wrap is dependent on ATP binding by UvrB and probably causes local melting of the DNA helix, facilitating insertion of UvrB beta-hairpin between the DNA strands. Then UvrB probes one DNA strand for the presence of a lesion. If a lesion is found the UvrA subunits dissociate and the UvrB-DNA preincision complex is formed. This complex is subsequently bound by UvrC and the second UvrB is released. If no lesion is found, the DNA wraps around the other UvrB subunit that will check the other stand for damage. In Tropheryma whipplei (strain TW08/27) (Whipple's bacillus), this protein is UvrABC system protein B.